We begin with the raw amino-acid sequence, 3131 residues long: Intermembrane lipid transfer protein vps1302 (3131 aa).

The 114-residue stretch at 2–115 folds into the Chorein N-terminal domain; sequence LEGLLANFLN…VLESKRRQMQ (114 aa). Positions 774-801 are enriched in basic and acidic residues; the sequence is DGKASDDDDNGDWRPESSESLDSHESEY. A disordered region spans residues 774 to 807; that stretch reads DGKASDDDDNGDWRPESSESLDSHESEYKLNNTP. The SHR-BD domain occupies 2085–2363; sequence KVMIYPPYVI…NYSWDFPILK (279 aa).

It belongs to the VPS13 family.

It localises to the golgi apparatus. The protein resides in the trans-Golgi network. Its function is as follows. Mediates the transfer of lipids between membranes at organelle contact sites. May play a role in mitochondrial lipid homeostasis, Golgi vesicle transport, reticulophagy, actin cytoskeleton organization and formation of the forespore membrane. In Schizosaccharomyces pombe (strain 972 / ATCC 24843) (Fission yeast), this protein is Intermembrane lipid transfer protein vps1302.